Reading from the N-terminus, the 785-residue chain is Semaphorin-3F (785 aa).

The signal sequence occupies residues 1–18; it reads MLVTAFILWASLLTGAWP. Residues 31–545 form the Sema domain; that stretch reads RVRLSFKELK…SAVGVTHLSL (515 aa). Asn-53 is a glycosylation site (N-linked (GlcNAc...) asparagine). The cysteines at positions 104 and 115 are disulfide-linked. The N-linked (GlcNAc...) asparagine glycan is linked to Asn-126. Intrachain disulfides connect Cys-133-Cys-142, Cys-300-Cys-412, Cys-324-Cys-372, and Cys-548-Cys-566. Residues 583–602 form a disordered region; the sequence is RSRRQDVRHGNPIRQCRGFN. Residues 605 to 695 enclose the Ig-like C2-type domain; the sequence is ANKNAVESVQ…KHIVTRVQLH (91 aa). Cysteines 678 and 746 form a disulfide. Residues 753 to 785 form a disordered region; it reads VPPRPREAPGALRPPELQDQKKPRNRRHHPPDT. A compositionally biased stretch (basic residues) spans 775-785; that stretch reads PRNRRHHPPDT.

This sequence belongs to the semaphorin family. Expressed ubiquitously in adulthood. During embryogenesis, expressed in subregions of the central nervous system and various other tissues like skin, kidney, lung and intestine.

The protein localises to the secreted. In Mus musculus (Mouse), this protein is Semaphorin-3F (Sema3f).